The primary structure comprises 218 residues: dTTP/UTP pyrophosphatase (218 aa).

Residue D76 is the Proton acceptor of the active site.

This sequence belongs to the Maf family. YhdE subfamily. Requires a divalent metal cation as cofactor.

It is found in the cytoplasm. The catalysed reaction is dTTP + H2O = dTMP + diphosphate + H(+). It catalyses the reaction UTP + H2O = UMP + diphosphate + H(+). Functionally, nucleoside triphosphate pyrophosphatase that hydrolyzes dTTP and UTP. May have a dual role in cell division arrest and in preventing the incorporation of modified nucleotides into cellular nucleic acids. The polypeptide is dTTP/UTP pyrophosphatase (Cytophaga hutchinsonii (strain ATCC 33406 / DSM 1761 / CIP 103989 / NBRC 15051 / NCIMB 9469 / D465)).